A 366-amino-acid polypeptide reads, in one-letter code: Aminomethyltransferase (366 aa).

This sequence belongs to the GcvT family. In terms of assembly, the glycine cleavage system is composed of four proteins: P, T, L and H.

It carries out the reaction N(6)-[(R)-S(8)-aminomethyldihydrolipoyl]-L-lysyl-[protein] + (6S)-5,6,7,8-tetrahydrofolate = N(6)-[(R)-dihydrolipoyl]-L-lysyl-[protein] + (6R)-5,10-methylene-5,6,7,8-tetrahydrofolate + NH4(+). Its function is as follows. The glycine cleavage system catalyzes the degradation of glycine. This Moorella thermoacetica (strain ATCC 39073 / JCM 9320) protein is Aminomethyltransferase.